The chain runs to 245 residues: Large ribosomal subunit protein uL4 (245 aa).

Residues M1–A13 show a composition bias toward polar residues. Disordered stretches follow at residues M1–S28, A56–P114, and T224–K245. The span at G59 to G71 shows a compositional bias: basic and acidic residues. Basic residues predominate over residues G72–G83.

The protein belongs to the universal ribosomal protein uL4 family. Part of the 50S ribosomal subunit.

Its function is as follows. One of the primary rRNA binding proteins, this protein initially binds near the 5'-end of the 23S rRNA. It is important during the early stages of 50S assembly. It makes multiple contacts with different domains of the 23S rRNA in the assembled 50S subunit and ribosome. Forms part of the polypeptide exit tunnel. The chain is Large ribosomal subunit protein uL4 from Frankia casuarinae (strain DSM 45818 / CECT 9043 / HFP020203 / CcI3).